Reading from the N-terminus, the 102-residue chain is Fe-S protein maturation auxiliary factor YitW (102 aa).

The protein belongs to the MIP18 family.

Functionally, involved in the maturation of iron-sulfur (Fe-S) proteins. May function as a Fe-S cluster carrier. The sequence is that of Fe-S protein maturation auxiliary factor YitW (yitW) from Bacillus subtilis (strain 168).